Reading from the N-terminus, the 454-residue chain is Kynurenine--oxoglutarate transaminase 3 (454 aa).

Glycine 71 lines the substrate pocket. Lysine 116 is modified (N6-acetyllysine; alternate). Lysine 116 is subject to N6-succinyllysine; alternate. Position 218 (asparagine 218) interacts with substrate. N6-(pyridoxal phosphate)lysine is present on lysine 280. Arginine 429 is a binding site for substrate.

This sequence belongs to the class-I pyridoxal-phosphate-dependent aminotransferase family. Homodimer. Pyridoxal 5'-phosphate is required as a cofactor.

The enzyme catalyses L-kynurenine + 2-oxoglutarate = kynurenate + L-glutamate + H2O. It carries out the reaction L-kynurenine + glyoxylate = kynurenate + glycine + H2O. The catalysed reaction is 3-hydroxy-L-kynurenine + glyoxylate = xanthurenate + glycine + H2O. It catalyses the reaction an S-substituted L-cysteine + H2O = a thiol + pyruvate + NH4(+). It functions in the pathway amino-acid degradation; L-kynurenine degradation; kynurenate from L-kynurenine: step 1/2. Functionally, catalyzes the irreversible transamination of the L-tryptophan metabolite L-kynurenine to form kynurenic acid (KA), an intermediate in the tryptophan catabolic pathway which is also a broad spectrum antagonist of the three ionotropic excitatory amino acid receptors among others. May catalyze the beta-elimination of S-conjugates and Se-conjugates of L-(seleno)cysteine, resulting in the cleavage of the C-S or C-Se bond. Has transaminase activity towards L-kynurenine, tryptophan, phenylalanine, serine, cysteine, methionine, histidine, glutamine and asparagine with glyoxylate as an amino group acceptor (in vitro). Has lower activity with 2-oxoglutarate as amino group acceptor (in vitro). The chain is Kynurenine--oxoglutarate transaminase 3 from Rattus norvegicus (Rat).